The sequence spans 116 residues: uncharacterized protein (116 aa).

This is an uncharacterized protein from Bacillus subtilis (strain 168).